The chain runs to 430 residues: 3-phosphoshikimate 1-carboxyvinyltransferase (430 aa).

3-phosphoshikimate is bound by residues Lys-23, Ser-24, and Arg-28. Lys-23 lines the phosphoenolpyruvate pocket. Residues Gly-95 and Arg-123 each contribute to the phosphoenolpyruvate site. Ser-169, Gln-171, Asp-315, and Lys-342 together coordinate 3-phosphoshikimate. Residue Gln-171 coordinates phosphoenolpyruvate. Asp-315 (proton acceptor) is an active-site residue. Phosphoenolpyruvate is bound by residues Arg-346 and Arg-388.

This sequence belongs to the EPSP synthase family. Monomer.

The protein localises to the cytoplasm. It carries out the reaction 3-phosphoshikimate + phosphoenolpyruvate = 5-O-(1-carboxyvinyl)-3-phosphoshikimate + phosphate. Its pathway is metabolic intermediate biosynthesis; chorismate biosynthesis; chorismate from D-erythrose 4-phosphate and phosphoenolpyruvate: step 6/7. In terms of biological role, catalyzes the transfer of the enolpyruvyl moiety of phosphoenolpyruvate (PEP) to the 5-hydroxyl of shikimate-3-phosphate (S3P) to produce enolpyruvyl shikimate-3-phosphate and inorganic phosphate. This chain is 3-phosphoshikimate 1-carboxyvinyltransferase, found in Streptococcus pyogenes serotype M1.